The sequence spans 413 residues: Putative F-box protein At3g58820 (413 aa).

One can recognise an F-box domain in the interval 1–48; the sequence is MDGVSSLPNELLCHILSFLTTKEAALTSILSKRWRNLIAFVPNLYIDD.

The polypeptide is Putative F-box protein At3g58820 (Arabidopsis thaliana (Mouse-ear cress)).